A 181-amino-acid chain; its full sequence is Thioredoxin-like protein CITRX2, chloroplastic (181 aa).

A chloroplast-targeting transit peptide spans 1–70; the sequence is MQAATLSFQP…PDVATGKYVR (70 aa). A Thioredoxin domain is found at 72 to 181; the sequence is DYLVKKVSAK…MMRDIINNDL (110 aa). Active-site nucleophile residues include Cys104 and Cys107. Cys104 and Cys107 are disulfide-bonded.

Belongs to the thioredoxin family. Plant CITRX-type subfamily.

It is found in the plastid. The protein resides in the chloroplast. In terms of biological role, probable thiol-disulfide oxidoreductase that may play a role in proper chloroplast development. In Nicotiana benthamiana, this protein is Thioredoxin-like protein CITRX2, chloroplastic.